The primary structure comprises 1580 residues: Collagen alpha-1(XVI) chain (1580 aa).

Positions 1 to 21 (MLTSWAPGLWVLGLWATFSHG) are cleaved as a signal peptide. Asparagine 47 carries an N-linked (GlcNAc...) asparagine glycan. A Laminin G-like domain is found at 50-231 (GFNLIRRLNL…LQQAHIYCDP (182 aa)). Positions 232–374 (ELVLEEGCCE…SPDAPLQCVE (143 aa)) are nonhelical region 10 (NC10). Positions 324–547 (RESNVTLGPS…DPAPAWEGLG (224 aa)) are disordered. N-linked (GlcNAc...) asparagine glycosylation occurs at asparagine 327. Residues 375–424 (GPKGEKGESGDLGPPGLPGPTGQKGQKGEKGDGGLKGLPGKPGRDGRPGE) enclose the Collagen-like 1 domain. The segment at 375-509 (GPKGEKGESG…PGTKGEKGDP (135 aa)) is triple-helical region 9 (COL9) with 3 imperfections. The segment covering 449 to 460 (PGPPGLPGPPGI) has biased composition (pro residues). Over residues 486 to 495 (GKEGPGGKPG) the composition is skewed to gly residues. The segment at 510 to 524 (CEVCPTLPEGSQNFV) is nonhelical region 9 (NC9). A triple-helical region 8 (COL8) with 1 imperfection region spans residues 525-570 (GLPGKPGPKGEPGDPAPAWEGLGTVGLKGDRGDPGIQGMKGEKGEP). The Cell attachment site signature appears at 555 to 557 (RGD). Positions 571 to 586 (CSSCSSGVGAQHLGPS) are nonhelical region 8 (NC8). The segment covering 585 to 598 (PSPGHGLPGLPGTS) has biased composition (low complexity). A disordered region spans residues 585–935 (PSPGHGLPGL…LPGQPGLTAE (351 aa)). The segment at 587–640 (PGHGLPGLPGTSGIPGPRGLKGEKGSFGDTGPAGVPGSPGPVGPAGIKGAKGEP) is triple-helical region 7 (COL7) with 1 imperfection. 2 consecutive Collagen-like domains span residues 590–643 (GLPG…PCEP) and 676–725 (GLPG…PAGP). Residues 641–661 (CEPCTALSELQDGDMRVVHLP) are nonhelical region 7 (NC7). The triple-helical region 6 (COL6) with 1 imperfection stretch occupies residues 662–732 (GPAGEKGEPG…AGPKGEKGDG (71 aa)). Over residues 683–693 (KAGERGLKGQK) the composition is skewed to basic and acidic residues. Residues 698–714 (NPGDPGTPGITGQPGIS) show a composition bias toward low complexity. A nonhelical region 6 (NC6) region spans residues 733 to 747 (CTACPSLQGALTDVS). The segment at 748 to 870 (GLPGKPGPKG…RGEKGEPGEC (123 aa)) is triple-helical region 5 (COL5) with 3 imperfections. Positions 797–848 (GAEGPQGEPGTQGLPGTQGLPGPRGPPGSAGEKGAQGSPGPKGAIGPMGPPG) constitute a Collagen-like 4 domain. Over residues 801–817 (PQGEPGTQGLPGTQGLP) the composition is skewed to low complexity. The segment at 871-881 (SCPSRGEPIFS) is nonhelical region 5 (NC5). Positions 882–933 (GMPGAPGLWMGSSSQPGPQGPPGVPGPPGPPGMPGLQGVPGHNGLPGQPGLT) are triple-helical region 4 (COL4) with 2 imperfections. A compositionally biased stretch (pro residues) spans 899 to 914 (PQGPPGVPGPPGPPGM). Positions 934-967 (AELGSLPIEKHLLKSICGDCAQGQTAHPAFLLEK) are nonhelical region 4 (NC4). Positions 968-982 (GEKGDQGIPGVPGFD) are triple-helical region 3 (COL3). The interval 983–1005 (NCARCFIERERPRAEEARGDNSE) is nonhelical region 3 (NC3). Disordered stretches follow at residues 995-1405 (RAEE…LPGS) and 1445-1523 (AAAP…GYGK). A Cell attachment site motif is present at residues 1000–1002 (RGD). The Collagen-like 5 domain occupies 1006-1063 (GEPGCSGSPGLPGPPGMPGQRGEEGPPGMRGSPGPPGPIGLQGERGLTGLTGDKGEPG). The segment at 1006–1409 (GEPGCSGSPG…PGLPGSMGDM (404 aa)) is triple-helical region 2 (COL2) with 2 imperfections. Residues 1098–1107 (SGPPGSEGLP) are compositionally biased toward low complexity. Composition is skewed to pro residues over residues 1139–1148 (FPGPPGPPGF) and 1178–1187 (SPGPPGPPGI). Over residues 1196–1205 (LDGKDGKPGL) the composition is skewed to basic and acidic residues. The short motif at 1206 to 1208 (RGD) is the Cell attachment site element. The 54-residue stretch at 1210-1263 (GPAGPPGLMGPPGFKGKTGHPGLPGPKGDCGKPGPPGSSGRPGAEGEPGAMGPQ) folds into the Collagen-like 6 domain. The span at 1247–1263 (SSGRPGAEGEPGAMGPQ) shows a compositional bias: low complexity. Residues 1265-1281 (RPGPPGHLGPPGQPGPP) show a composition bias toward pro residues. 3 Collagen-like domains span residues 1350 to 1407 (GQKG…GSMG), 1448 to 1500 (PGRP…GDIG), and 1504 to 1552 (AGEN…GKAG). Residues 1362-1371 (GMPGGPGKSG) show a composition bias toward gly residues. The segment covering 1396 to 1405 (NPGLPGLPGS) has biased composition (low complexity). A nonhelical region 2 (NC2) region spans residues 1410–1448 (VNYDDIKRFIRQEIIKLFDERMAYYTSRMQFPMEVAAAP). Residues 1449–1554 (GRPGPPGKDG…MGQPGKAGHC (106 aa)) form a triple-helical region 1 (COL1) with 2 imperfections region. The segment at 1555-1580 (NPSDCFGAMPMEQQYPPMKSMKGPFG) is nonhelical region 1 (NC1).

It belongs to the fibril-associated collagens with interrupted helices (FACIT) family. In terms of assembly, homotrimer. Interacts with FBN1, fibronectin and integrins ITGA1/ITGB1 and ITGA2/ITGB1. Integrin ITGA1/ITGB1 binds to a unique site within COL16A1 located close to its C-terminal end between collagenous domains COL1-COL3. In terms of processing, prolines at the third position of the tripeptide repeating unit (G-X-Y) are hydroxylated in some or all of the chains. Glycosylated. Expressed in most tissues examined with highest levels of expression observed in heart. Strongly expressed in cortical and medullar regions of kidney and more weakly expressed in lung. Also detected in the ciliary muscle of the eye, on the serosa layer lining the muscularis externa of intestinal tissue, and in the perimysium membrane lining both the cardiac muscle bundle and the smooth muscle tissue of the small intestine. Strongly stained in particulate or granular structures. Not detected in brain or skeletal muscle.

The protein resides in the secreted. It is found in the extracellular space. It localises to the extracellular matrix. Its function is as follows. Involved in mediating cell attachment and inducing integrin-mediated cellular reactions, such as cell spreading and alterations in cell morphology. The sequence is that of Collagen alpha-1(XVI) chain from Mus musculus (Mouse).